A 146-amino-acid chain; its full sequence is Large ribosomal subunit protein uL15 (146 aa).

Positions 1–18 are enriched in basic and acidic residues; the sequence is MKLHELKPTPGSRHERNR. Residues 1 to 69 are disordered; sequence MKLHELKPTP…RLPKRGFNNP (69 aa). The segment covering 42 to 52 has biased composition (gly residues); it reads SGGGVRPGFEG.

Belongs to the universal ribosomal protein uL15 family. Part of the 50S ribosomal subunit.

In terms of biological role, binds to the 23S rRNA. This chain is Large ribosomal subunit protein uL15, found in Exiguobacterium sp. (strain ATCC BAA-1283 / AT1b).